The chain runs to 417 residues: NADH-quinone oxidoreductase subunit D (417 aa).

It belongs to the complex I 49 kDa subunit family. NDH-1 is composed of 14 different subunits. Subunits NuoB, C, D, E, F, and G constitute the peripheral sector of the complex.

The protein resides in the cell inner membrane. It catalyses the reaction a quinone + NADH + 5 H(+)(in) = a quinol + NAD(+) + 4 H(+)(out). NDH-1 shuttles electrons from NADH, via FMN and iron-sulfur (Fe-S) centers, to quinones in the respiratory chain. The immediate electron acceptor for the enzyme in this species is believed to be ubiquinone. Couples the redox reaction to proton translocation (for every two electrons transferred, four hydrogen ions are translocated across the cytoplasmic membrane), and thus conserves the redox energy in a proton gradient. This Coxiella burnetii (strain CbuG_Q212) (Coxiella burnetii (strain Q212)) protein is NADH-quinone oxidoreductase subunit D.